Reading from the N-terminus, the 152-residue chain is Protein-export protein SecB (152 aa).

This sequence belongs to the SecB family. Homotetramer, a dimer of dimers. One homotetramer interacts with 1 SecA dimer.

It is found in the cytoplasm. Functionally, one of the proteins required for the normal export of preproteins out of the cell cytoplasm. It is a molecular chaperone that binds to a subset of precursor proteins, maintaining them in a translocation-competent state. It also specifically binds to its receptor SecA. This Rickettsia africae (strain ESF-5) protein is Protein-export protein SecB.